Reading from the N-terminus, the 296-residue chain is Phosphoribosylaminoimidazole-succinocarboxamide synthase (296 aa).

The protein belongs to the SAICAR synthetase family.

It carries out the reaction 5-amino-1-(5-phospho-D-ribosyl)imidazole-4-carboxylate + L-aspartate + ATP = (2S)-2-[5-amino-1-(5-phospho-beta-D-ribosyl)imidazole-4-carboxamido]succinate + ADP + phosphate + 2 H(+). The protein operates within purine metabolism; IMP biosynthesis via de novo pathway; 5-amino-1-(5-phospho-D-ribosyl)imidazole-4-carboxamide from 5-amino-1-(5-phospho-D-ribosyl)imidazole-4-carboxylate: step 1/2. The chain is Phosphoribosylaminoimidazole-succinocarboxamide synthase from Geobacter metallireducens (strain ATCC 53774 / DSM 7210 / GS-15).